A 1294-amino-acid chain; its full sequence is ATPase PglY (1294 aa).

The tract at residues threonine 1205 to alanine 1263 is disordered. Polar residues predominate over residues aspartate 1228–proline 1244. Residues threonine 1252–alanine 1263 are compositionally biased toward low complexity.

Its function is as follows. BREX systems (bacteriophage exclusion) provide immunity against bacteriophage. Part of a type 2 BREX system. Previously called the phage growth limitation (Pgl) system, it confers protection against bacteriophage phiC31. The bacteria allows one cycle of phage infection, but subsequent cycles are impaired, protecting the original bacterial colony. The system undergoes high rates (10(-3) to 10(-4)) of phase reversion, i.e. loss and regain of phiC31 resistance. When the pglW-pglX-pglY-pglZ genes are transformed into a susceptible S.lividans (strain 1326) they confer resistance to infection by phage phiC31 and phiBT1; all 4 genes are necessary. Hydrolyzes ATP but not AMP, ADP, GMP, GDP or GTP; activity is inhibited by the non-hydrolyzable ATP analog 5-adenylyl beta,gamma-imidodiphosphate. In Streptomyces coelicolor (strain ATCC BAA-471 / A3(2) / M145), this protein is ATPase PglY.